The primary structure comprises 426 residues: MYVLKNGQVLNASGKLESKDVLIQNGKVNLIADSIEVTSGEEFDATGKLITPGFIDVHVHLREPGGEHKETILTGTKAAARGGYTTICSMPNTKPVPDSKEVMESIQAKIKETAKVRVLPYASITTSLGTDELVDFEALKEAGAFAFTDDGVGVQLAGTMYEAMKRAAALDMAIVAHCEDNSLIYGGVVHDGIFAEKEGLKGIPNIAESVQIARDVLLAEAAGCHYHVCHISTKESVRVVRDAKRAGIRVTAEVSPHHLILDEEAIPGNDGNWKMNPPLRSKEDRAALLEGLLDGTIDFIATDHAPHAAEEKNVPMEQAAFGIVGLETAFPLLYTHFVKTNEWTLKQLIDWMTVKPAECFKLPYGKLEEGSVADIVVLDLEKEANIDPDTFYSKGKNTPFVGETCIGWPVATFAEGTLVYNEGEIK.

Residues histidine 58 and histidine 60 each coordinate Zn(2+). Substrate-binding positions include 60 to 62 and asparagine 92; that span reads HLR. Residues aspartate 150, histidine 177, and histidine 230 each coordinate Zn(2+). Substrate is bound at residue asparagine 276. Aspartate 303 serves as a coordination point for Zn(2+). Residue aspartate 303 is part of the active site. Substrate contacts are provided by residues histidine 307 and 321–322; that span reads FG.

It belongs to the metallo-dependent hydrolases superfamily. DHOase family. Class I DHOase subfamily. The cofactor is Zn(2+).

It carries out the reaction (S)-dihydroorotate + H2O = N-carbamoyl-L-aspartate + H(+). It participates in pyrimidine metabolism; UMP biosynthesis via de novo pathway; (S)-dihydroorotate from bicarbonate: step 3/3. Catalyzes the reversible cyclization of carbamoyl aspartate to dihydroorotate. The chain is Dihydroorotase from Listeria monocytogenes serovar 1/2a (strain ATCC BAA-679 / EGD-e).